A 427-amino-acid polypeptide reads, in one-letter code: Glutamate-1-semialdehyde 2,1-aminomutase (427 aa).

An N6-(pyridoxal phosphate)lysine modification is found at Lys-268.

This sequence belongs to the class-III pyridoxal-phosphate-dependent aminotransferase family. HemL subfamily. It depends on pyridoxal 5'-phosphate as a cofactor.

The protein localises to the cytoplasm. The catalysed reaction is (S)-4-amino-5-oxopentanoate = 5-aminolevulinate. The protein operates within porphyrin-containing compound metabolism; protoporphyrin-IX biosynthesis; 5-aminolevulinate from L-glutamyl-tRNA(Glu): step 2/2. In Methanococcus maripaludis (strain DSM 14266 / JCM 13030 / NBRC 101832 / S2 / LL), this protein is Glutamate-1-semialdehyde 2,1-aminomutase.